Reading from the N-terminus, the 602-residue chain is Proteasome-associated ATPase (602 aa).

Positions 13–89 (PDAAEVERLR…LREEVDRLGQ (77 aa)) form a coiled coil. 289–294 (GCGKTL) contributes to the ATP binding site. Residues 601–602 (YL) are docks into pockets in the proteasome alpha-ring.

It belongs to the AAA ATPase family. As to quaternary structure, homohexamer. Assembles into a hexameric ring structure that caps the 20S proteasome core. Strongly interacts with the prokaryotic ubiquitin-like protein Pup through a hydrophobic interface; the interacting region of ARC lies in its N-terminal coiled-coil domain. There is one Pup binding site per ARC hexamer ring. Upon ATP-binding, the C-terminus of ARC interacts with the alpha-rings of the proteasome core, possibly by binding to the intersubunit pockets.

It functions in the pathway protein degradation; proteasomal Pup-dependent pathway. Functionally, ATPase which is responsible for recognizing, binding, unfolding and translocation of pupylated proteins into the bacterial 20S proteasome core particle. May be essential for opening the gate of the 20S proteasome via an interaction with its C-terminus, thereby allowing substrate entry and access to the site of proteolysis. Thus, the C-termini of the proteasomal ATPase may function like a 'key in a lock' to induce gate opening and therefore regulate proteolysis. In Mycobacteroides abscessus (strain ATCC 19977 / DSM 44196 / CCUG 20993 / CIP 104536 / JCM 13569 / NCTC 13031 / TMC 1543 / L948) (Mycobacterium abscessus), this protein is Proteasome-associated ATPase.